A 275-amino-acid polypeptide reads, in one-letter code: Subtilisin (275 aa).

Ca(2+) is bound at residue Q2. Residues P5–A274 enclose the Peptidase S8 domain. D32 functions as the Charge relay system in the catalytic mechanism. Residue D41 participates in Ca(2+) binding. The active-site Charge relay system is the H64. Ca(2+)-binding residues include L75, N77, I79, V81, A169, Y171, and T174. The Charge relay system role is filled by S221.

It belongs to the peptidase S8 family. Ca(2+) is required as a cofactor.

It is found in the secreted. The enzyme catalyses Hydrolysis of proteins with broad specificity for peptide bonds, and a preference for a large uncharged residue in P1. Hydrolyzes peptide amides.. In terms of biological role, subtilisin is an extracellular alkaline serine protease, it catalyzes the hydrolysis of proteins and peptide amides. This is Subtilisin (apr) from Bacillus pumilus (Bacillus mesentericus).